Consider the following 282-residue polypeptide: NADPH-dependent 7-cyano-7-deazaguanine reductase (282 aa).

88 to 90 serves as a coordination point for substrate; the sequence is IES. NADPH is bound at residue 90 to 91; the sequence is SK. The active-site Thioimide intermediate is cysteine 190. The active-site Proton donor is the aspartate 197. 229–230 is a binding site for substrate; that stretch reads HE. NADPH is bound at residue 258 to 259; that stretch reads RG.

It belongs to the GTP cyclohydrolase I family. QueF type 2 subfamily. Homodimer.

It is found in the cytoplasm. It catalyses the reaction 7-aminomethyl-7-carbaguanine + 2 NADP(+) = 7-cyano-7-deazaguanine + 2 NADPH + 3 H(+). It participates in tRNA modification; tRNA-queuosine biosynthesis. Its function is as follows. Catalyzes the NADPH-dependent reduction of 7-cyano-7-deazaguanine (preQ0) to 7-aminomethyl-7-deazaguanine (preQ1). The polypeptide is NADPH-dependent 7-cyano-7-deazaguanine reductase (Escherichia coli O81 (strain ED1a)).